Reading from the N-terminus, the 460-residue chain is Ribosomal protein uS12 methylthiotransferase RimO (460 aa).

Residues 9-119 (PKVGFVSLGC…VMEAVHAALP (111 aa)) form the MTTase N-terminal domain. [4Fe-4S] cluster contacts are provided by Cys18, Cys54, Cys83, Cys150, Cys154, and Cys157. The Radical SAM core domain occupies 136 to 374 (LTPRHYAYLK…AKQAEISALR (239 aa)). Residues 376 to 444 (EAKIGSVQQC…EHDLFGDALP (69 aa)) enclose the TRAM domain.

It belongs to the methylthiotransferase family. RimO subfamily. It depends on [4Fe-4S] cluster as a cofactor.

The protein resides in the cytoplasm. The enzyme catalyses L-aspartate(89)-[ribosomal protein uS12]-hydrogen + (sulfur carrier)-SH + AH2 + 2 S-adenosyl-L-methionine = 3-methylsulfanyl-L-aspartate(89)-[ribosomal protein uS12]-hydrogen + (sulfur carrier)-H + 5'-deoxyadenosine + L-methionine + A + S-adenosyl-L-homocysteine + 2 H(+). Functionally, catalyzes the methylthiolation of an aspartic acid residue of ribosomal protein uS12. The protein is Ribosomal protein uS12 methylthiotransferase RimO of Xanthomonas oryzae pv. oryzae (strain PXO99A).